We begin with the raw amino-acid sequence, 364 residues long: Aminomethyltransferase (364 aa).

The protein belongs to the GcvT family. As to quaternary structure, the glycine cleavage system is composed of four proteins: P, T, L and H.

The enzyme catalyses N(6)-[(R)-S(8)-aminomethyldihydrolipoyl]-L-lysyl-[protein] + (6S)-5,6,7,8-tetrahydrofolate = N(6)-[(R)-dihydrolipoyl]-L-lysyl-[protein] + (6R)-5,10-methylene-5,6,7,8-tetrahydrofolate + NH4(+). Its function is as follows. The glycine cleavage system catalyzes the degradation of glycine. The chain is Aminomethyltransferase from Citrobacter koseri (strain ATCC BAA-895 / CDC 4225-83 / SGSC4696).